Reading from the N-terminus, the 1030-residue chain is LPS-assembly protein LptD (1030 aa).

The signal sequence occupies residues 1–32 (MEGPPTAAHAAAPLRTAVFLALAASWQQPAVA). Residues 50 to 213 (VAKRKDGGAD…APAGWTCKPQ (164 aa)) are disordered. A compositionally biased stretch (polar residues) spans 78–91 (LSQSNRAAPSTAVS). Positions 126-137 (TEDEEDEESESA) are enriched in acidic residues. A compositionally biased stretch (pro residues) spans 161–171 (GTPPARAPRPE).

Belongs to the LptD family. Component of the lipopolysaccharide transport and assembly complex. Interacts with LptE and LptA.

The protein resides in the cell outer membrane. Together with LptE, is involved in the assembly of lipopolysaccharide (LPS) at the surface of the outer membrane. In Methylococcus capsulatus (strain ATCC 33009 / NCIMB 11132 / Bath), this protein is LPS-assembly protein LptD.